The following is a 652-amino-acid chain: DNA ligase (652 aa).

Residues 29 to 33 (DSQYD), 78 to 79 (SL), and E107 contribute to the NAD(+) site. The active-site N6-AMP-lysine intermediate is K109. R130, E164, K278, and K302 together coordinate NAD(+). 4 residues coordinate Zn(2+): C395, C398, C413, and C418. The BRCT domain maps to 577–652 (STDAQLSGLT…IQDEDWLLNL (76 aa)).

This sequence belongs to the NAD-dependent DNA ligase family. LigA subfamily. It depends on Mg(2+) as a cofactor. The cofactor is Mn(2+).

It catalyses the reaction NAD(+) + (deoxyribonucleotide)n-3'-hydroxyl + 5'-phospho-(deoxyribonucleotide)m = (deoxyribonucleotide)n+m + AMP + beta-nicotinamide D-nucleotide.. DNA ligase that catalyzes the formation of phosphodiester linkages between 5'-phosphoryl and 3'-hydroxyl groups in double-stranded DNA using NAD as a coenzyme and as the energy source for the reaction. It is essential for DNA replication and repair of damaged DNA. This chain is DNA ligase, found in Streptococcus agalactiae serotype V (strain ATCC BAA-611 / 2603 V/R).